A 242-amino-acid chain; its full sequence is Glutamine transport ATP-binding protein GlnQ (242 aa).

Positions 2-236 (ITFQNVNKHY…PKEERARLFL (235 aa)) constitute an ABC transporter domain. Position 34–41 (34–41 (GPSGSGKS)) interacts with ATP.

The protein belongs to the ABC transporter superfamily. In terms of assembly, the complex is composed of two ATP-binding proteins (GlnQ), two transmembrane proteins (GlnM and GlnP) and a solute-binding protein (GlnH).

It localises to the cell membrane. In terms of biological role, part of the ABC transporter complex GlnHMPQ involved in glutamine transport. Probably responsible for energy coupling to the transport system. In Bacillus subtilis (strain 168), this protein is Glutamine transport ATP-binding protein GlnQ (glnQ).